The following is a 215-amino-acid chain: uncharacterized protein (215 aa).

This sequence belongs to the thiaminase-2 family.

This is an uncharacterized protein from Haemophilus influenzae (strain ATCC 51907 / DSM 11121 / KW20 / Rd).